The following is a 277-amino-acid chain: Glycerol-3-phosphate acyltransferase (277 aa).

5 consecutive transmembrane segments (helical) span residues 3–23 (LFIF…AIIV), 55–75 (IMVM…AKFL), 79–99 (PVTV…PVFF), 111–131 (IGAL…TWLL), and 155–175 (LILV…ILVL). The interval 207-277 (SPATSAEQEF…PKTKTVKEKE (71 aa)) is disordered. Residues 216–239 (FPGKEVIDTNIDETEKTEQAEAVK) are compositionally biased toward basic and acidic residues. Composition is skewed to basic residues over residues 240 to 253 (KPKV…AKKT) and 262 to 271 (KPKSTKPKTK).

It belongs to the PlsY family. Probably interacts with PlsX.

The protein localises to the cell inner membrane. The catalysed reaction is an acyl phosphate + sn-glycerol 3-phosphate = a 1-acyl-sn-glycero-3-phosphate + phosphate. It functions in the pathway lipid metabolism; phospholipid metabolism. Catalyzes the transfer of an acyl group from acyl-phosphate (acyl-PO(4)) to glycerol-3-phosphate (G3P) to form lysophosphatidic acid (LPA). This enzyme utilizes acyl-phosphate as fatty acyl donor, but not acyl-CoA or acyl-ACP. This chain is Glycerol-3-phosphate acyltransferase, found in Legionella pneumophila subsp. pneumophila (strain Philadelphia 1 / ATCC 33152 / DSM 7513).